A 381-amino-acid polypeptide reads, in one-letter code: Homoserine O-succinyltransferase (381 aa).

One can recognise an AB hydrolase-1 domain in the interval 45–360 (NAVLVCHALN…PHGHDAFLLD (316 aa)). Ser151 acts as the Nucleophile in catalysis. Position 221 (Arg221) interacts with substrate. Active-site residues include Asp321 and His354. Residue Asp355 coordinates substrate.

The protein belongs to the AB hydrolase superfamily. MetX family. As to quaternary structure, homodimer.

The protein resides in the cytoplasm. The enzyme catalyses L-homoserine + succinyl-CoA = O-succinyl-L-homoserine + CoA. It functions in the pathway amino-acid biosynthesis; L-methionine biosynthesis via de novo pathway; O-succinyl-L-homoserine from L-homoserine: step 1/1. Transfers a succinyl group from succinyl-CoA to L-homoserine, forming succinyl-L-homoserine. This is Homoserine O-succinyltransferase from Burkholderia lata (strain ATCC 17760 / DSM 23089 / LMG 22485 / NCIMB 9086 / R18194 / 383).